We begin with the raw amino-acid sequence, 607 residues long: Glutamine--fructose-6-phosphate aminotransferase [isomerizing] (607 aa).

The active-site Nucleophile; for GATase activity is Cys-2. The 216-residue stretch at 2–217 (CGIIGIIGND…DGDWAVLTRN (216 aa)) folds into the Glutamine amidotransferase type-2 domain. SIS domains are found at residues 283–422 (IGID…ARGA) and 455–597 (VCHD…VDQP). Residue Lys-602 is the For Fru-6P isomerization activity of the active site.

Homodimer.

It localises to the cytoplasm. It carries out the reaction D-fructose 6-phosphate + L-glutamine = D-glucosamine 6-phosphate + L-glutamate. In terms of biological role, catalyzes the first step in hexosamine metabolism, converting fructose-6P into glucosamine-6P using glutamine as a nitrogen source. The chain is Glutamine--fructose-6-phosphate aminotransferase [isomerizing] from Brucella suis biovar 1 (strain 1330).